The following is a 581-amino-acid chain: Alpha-amylase 2 (581 aa).

A signal peptide spans 1-24 (MNYRRNICLRIGWMLLFAFIPAYA). Residues Cys56 and Cys64 are joined by a disulfide bond. Residue Trp109 coordinates substrate. Asn147 is a binding site for Ca(2+). Cys176 and Cys191 form a disulfide bridge. Asp202 is a Ca(2+) binding site. Residue Arg231 participates in substrate binding. 3 residues coordinate Ca(2+): Asp233, His237, and Glu257. Catalysis depends on Asp233, which acts as the Nucleophile. 236-237 (KH) serves as a coordination point for substrate. Catalysis depends on Glu257, which acts as the Proton donor. Gly261 contacts substrate. Cys267 and Cys311 are joined by a disulfide. Asn291 carries an N-linked (GlcNAc...) asparagine glycan. Asp325 provides a ligand contact to substrate. N-linked (GlcNAc...) asparagine glycosylation occurs at Asn332. Arg372 contacts substrate. Ser551 carries GPI-anchor amidated serine lipidation. Residues 552-581 (EAKTIRSFTKLKLFILLIAVPFALPMIILI) constitute a propeptide, removed in mature form.

This sequence belongs to the glycosyl hydrolase 13 family. It depends on Ca(2+) as a cofactor.

The protein localises to the cell membrane. The catalysed reaction is Endohydrolysis of (1-&gt;4)-alpha-D-glucosidic linkages in polysaccharides containing three or more (1-&gt;4)-alpha-linked D-glucose units.. In Schizosaccharomyces pombe (strain 972 / ATCC 24843) (Fission yeast), this protein is Alpha-amylase 2 (aah2).